The sequence spans 491 residues: F-box protein At3g59000 (491 aa).

The F-box domain maps to 1–49 (MDRVGSLPDELLSHILSFLTTKEAALTSLLSKRWRYLIAFVPNLAFDDI).

Part of a SCF (ASK-cullin-F-box) protein ligase complex. Interacts with ASK4.

The protein resides in the nucleus. Its pathway is protein modification; protein ubiquitination. Functionally, component of SCF(ASK-cullin-F-box) E3 ubiquitin ligase complexes, which may mediate the ubiquitination and subsequent proteasomal degradation of target proteins. This chain is F-box protein At3g59000, found in Arabidopsis thaliana (Mouse-ear cress).